A 361-amino-acid polypeptide reads, in one-letter code: DNA replication and repair protein RecF (361 aa).

30 to 37 lines the ATP pocket; sequence GANGSGKT.

Belongs to the RecF family.

The protein localises to the cytoplasm. Functionally, the RecF protein is involved in DNA metabolism; it is required for DNA replication and normal SOS inducibility. RecF binds preferentially to single-stranded, linear DNA. It also seems to bind ATP. The polypeptide is DNA replication and repair protein RecF (Chromohalobacter salexigens (strain ATCC BAA-138 / DSM 3043 / CIP 106854 / NCIMB 13768 / 1H11)).